The sequence spans 911 residues: Protein translocase subunit SecA (911 aa).

ATP contacts are provided by residues Gln-87, 105 to 109 (GEGKT), and Asp-512. The disordered stretch occupies residues 861-893 (APGLESEQLSEEGAEVAVASAPVRNDQKLGRNE). Residues Cys-895, Cys-897, Cys-906, and His-907 each contribute to the Zn(2+) site.

The protein belongs to the SecA family. In terms of assembly, monomer and homodimer. Part of the essential Sec protein translocation apparatus which comprises SecA, SecYEG and auxiliary proteins SecDF-YajC and YidC. The cofactor is Zn(2+).

Its subcellular location is the cell inner membrane. It is found in the cytoplasm. The enzyme catalyses ATP + H2O + cellular proteinSide 1 = ADP + phosphate + cellular proteinSide 2.. In terms of biological role, part of the Sec protein translocase complex. Interacts with the SecYEG preprotein conducting channel. Has a central role in coupling the hydrolysis of ATP to the transfer of proteins into and across the cell membrane, serving both as a receptor for the preprotein-SecB complex and as an ATP-driven molecular motor driving the stepwise translocation of polypeptide chains across the membrane. This Pseudomonas putida (strain ATCC 700007 / DSM 6899 / JCM 31910 / BCRC 17059 / LMG 24140 / F1) protein is Protein translocase subunit SecA.